A 758-amino-acid chain; its full sequence is 5-methyltetrahydropteroyltriglutamate--homocysteine methyltransferase (758 aa).

5-methyltetrahydropteroyltri-L-glutamate contacts are provided by residues 16–19 (RELK) and Lys-112. L-homocysteine-binding positions include 433–435 (IGS) and Glu-486. Residues 433-435 (IGS) and Glu-486 each bind L-methionine. 5-methyltetrahydropteroyltri-L-glutamate contacts are provided by residues 517–518 (RC) and Trp-563. Asp-601 is an L-homocysteine binding site. Residue Asp-601 coordinates L-methionine. 5-methyltetrahydropteroyltri-L-glutamate is bound at residue Glu-607. Residues His-643, Cys-645, and Glu-667 each coordinate Zn(2+). Residue His-696 is the Proton donor of the active site. Residue Cys-728 coordinates Zn(2+).

Belongs to the vitamin-B12 independent methionine synthase family. Requires Zn(2+) as cofactor.

It catalyses the reaction 5-methyltetrahydropteroyltri-L-glutamate + L-homocysteine = tetrahydropteroyltri-L-glutamate + L-methionine. Its pathway is amino-acid biosynthesis; L-methionine biosynthesis via de novo pathway; L-methionine from L-homocysteine (MetE route): step 1/1. Functionally, catalyzes the transfer of a methyl group from 5-methyltetrahydrofolate to homocysteine resulting in methionine formation. The polypeptide is 5-methyltetrahydropteroyltriglutamate--homocysteine methyltransferase (Neisseria meningitidis serogroup C / serotype 2a (strain ATCC 700532 / DSM 15464 / FAM18)).